Reading from the N-terminus, the 210-residue chain is MKLVFLGPPGSGKGTIAKILSGKLNYYHISTGDLFRANISNATPLGKEIKQIVENGQLVPDSITIKIVEDKINTLANKDNFILDGFPRNINQAKALDTFLQNIQIINFLLDEAILIKRLSGRRICQSCGGIFNIYTLPTKEKGICDLCKGSLYQRKDDVEESLKIRLQEYHLQTKPLIDFYSKNNRLNNINASKDIDGVEKSLIEIISKY.

10–15 (GSGKGT) contributes to the ATP binding site. The tract at residues 30–59 (STGDLFRANISNATPLGKEIKQIVENGQLV) is NMP. AMP-binding positions include Thr31, Arg36, 57-59 (QLV), 85-88 (GFPR), and Gln92. An LID region spans residues 121–158 (GRRICQSCGGIFNIYTLPTKEKGICDLCKGSLYQRKDD). Arg122 contributes to the ATP binding site. Zn(2+) is bound by residues Cys125 and Cys128. 131–132 (IF) serves as a coordination point for ATP. Cys145 and Cys148 together coordinate Zn(2+). Positions 155 and 166 each coordinate AMP. Residue Lys194 participates in ATP binding.

This sequence belongs to the adenylate kinase family. Monomer.

Its subcellular location is the cytoplasm. It catalyses the reaction AMP + ATP = 2 ADP. Its pathway is purine metabolism; AMP biosynthesis via salvage pathway; AMP from ADP: step 1/1. In terms of biological role, catalyzes the reversible transfer of the terminal phosphate group between ATP and AMP. Plays an important role in cellular energy homeostasis and in adenine nucleotide metabolism. In Borrelia turicatae (strain 91E135), this protein is Adenylate kinase.